The sequence spans 119 residues: uncharacterized protein (119 aa).

This is an uncharacterized protein from Schizosaccharomyces pombe (strain 972 / ATCC 24843) (Fission yeast).